Reading from the N-terminus, the 335-residue chain is Holliday junction branch migration complex subunit RuvB (335 aa).

A large ATPase domain (RuvB-L) region spans residues 4–184; that stretch reads ADRIISTSAK…FGIVQRLEFY (181 aa). Residues I23, R24, G65, K68, T69, T70, 131–133, R174, Y184, and R221 contribute to the ATP site; that span reads EDY. T69 is a Mg(2+) binding site. The small ATPAse domain (RuvB-S) stretch occupies residues 185–255; it reads AVEDLTSIVA…SAKAALLMLD (71 aa). The segment at 258–335 is head domain (RuvB-H); it reads DAGFDYLDRK…RYFGLEKLTE (78 aa). Residues R294, R313, and R318 each contribute to the DNA site.

It belongs to the RuvB family. As to quaternary structure, homohexamer. Forms an RuvA(8)-RuvB(12)-Holliday junction (HJ) complex. HJ DNA is sandwiched between 2 RuvA tetramers; dsDNA enters through RuvA and exits via RuvB. An RuvB hexamer assembles on each DNA strand where it exits the tetramer. Each RuvB hexamer is contacted by two RuvA subunits (via domain III) on 2 adjacent RuvB subunits; this complex drives branch migration. In the full resolvosome a probable DNA-RuvA(4)-RuvB(12)-RuvC(2) complex forms which resolves the HJ.

It localises to the cytoplasm. It catalyses the reaction ATP + H2O = ADP + phosphate + H(+). Functionally, the RuvA-RuvB-RuvC complex processes Holliday junction (HJ) DNA during genetic recombination and DNA repair, while the RuvA-RuvB complex plays an important role in the rescue of blocked DNA replication forks via replication fork reversal (RFR). RuvA specifically binds to HJ cruciform DNA, conferring on it an open structure. The RuvB hexamer acts as an ATP-dependent pump, pulling dsDNA into and through the RuvAB complex. RuvB forms 2 homohexamers on either side of HJ DNA bound by 1 or 2 RuvA tetramers; 4 subunits per hexamer contact DNA at a time. Coordinated motions by a converter formed by DNA-disengaged RuvB subunits stimulates ATP hydrolysis and nucleotide exchange. Immobilization of the converter enables RuvB to convert the ATP-contained energy into a lever motion, pulling 2 nucleotides of DNA out of the RuvA tetramer per ATP hydrolyzed, thus driving DNA branch migration. The RuvB motors rotate together with the DNA substrate, which together with the progressing nucleotide cycle form the mechanistic basis for DNA recombination by continuous HJ branch migration. Branch migration allows RuvC to scan DNA until it finds its consensus sequence, where it cleaves and resolves cruciform DNA. This chain is Holliday junction branch migration complex subunit RuvB, found in Pasteurella multocida (strain Pm70).